Consider the following 153-residue polypeptide: Bkd operon transcriptional regulator (153 aa).

An HTH asnC-type domain is found at 4-65 (LDRIDLKILR…RLDEERLSGA (62 aa)). A DNA-binding region (H-T-H motif) is located at residues 23–42 (WRDLAQKVGLSLTPTLRRVR).

Functionally, positive regulator of the bkd operon for branched-chain keto acid dehydrogenase complex. The chain is Bkd operon transcriptional regulator (bkdR) from Pseudomonas aeruginosa (strain ATCC 15692 / DSM 22644 / CIP 104116 / JCM 14847 / LMG 12228 / 1C / PRS 101 / PAO1).